The sequence spans 165 residues: Transmembrane protein 253 (165 aa).

The next 3 helical transmembrane spans lie at 31–51, 60–80, and 91–111; these read LVLA…AVSV, MTTA…IVTL, and LAGL…GVLV. The interval 145–165 is disordered; that stretch reads EEVPELETGPTVASTAKRTNQ. Polar residues predominate over residues 155 to 165; that stretch reads TVASTAKRTNQ.

It localises to the membrane. The polypeptide is Transmembrane protein 253 (TMEM253) (Bos taurus (Bovine)).